Reading from the N-terminus, the 166-residue chain is Transcription factor HES-5 (166 aa).

Positions 16 to 72 (KNRLRKPVVEKMRRDRINSSIEQLKLLLEQEFARHQPNSKLEKADILEMAVSYLKHS) constitute a bHLH domain. Residues 88–119 (YSEGYSWCLQEAVQFLTLHAASDTQMKLLYHF) enclose the Orange domain. A disordered region spans residues 125–166 (PAAPVKETPTPGAAPQPARSSTKAAASVSTSRQSACGLWRPW). Positions 142–156 (ARSSTKAAASVSTSR) are enriched in low complexity. A WRPW motif motif is present at residues 163–166 (WRPW).

Transcription repression requires formation of a complex with a corepressor protein of the Groucho/TLE family. As to expression, expressed predominantly in embryonic neural lineage cells.

It localises to the nucleus. In terms of biological role, transcriptional repressor of genes that require a bHLH protein for their transcription. Plays an important role as neurogenesis negative regulator. This is Transcription factor HES-5 (Hes5) from Rattus norvegicus (Rat).